We begin with the raw amino-acid sequence, 428 residues long: Histidine--tRNA ligase (428 aa).

It belongs to the class-II aminoacyl-tRNA synthetase family. Homodimer.

It is found in the cytoplasm. It carries out the reaction tRNA(His) + L-histidine + ATP = L-histidyl-tRNA(His) + AMP + diphosphate + H(+). The protein is Histidine--tRNA ligase of Staphylococcus carnosus (strain TM300).